A 129-amino-acid polypeptide reads, in one-letter code: Fluoride-specific ion channel FluC 2 (129 aa).

Residues 19-39 (GLGLVVPAAAVGGFPLGTLFI) form a helical membrane-spanning segment. Na(+)-binding residues include Gly-74 and Thr-77. Residues 95–115 (FGMAAVYIAASLFGGLLASWA) traverse the membrane as a helical segment.

This sequence belongs to the fluoride channel Fluc/FEX (TC 1.A.43) family.

The protein localises to the cell membrane. The catalysed reaction is fluoride(in) = fluoride(out). Na(+) is not transported, but it plays an essential structural role and its presence is essential for fluoride channel function. Functionally, fluoride-specific ion channel. Important for reducing fluoride concentration in the cell, thus reducing its toxicity. The polypeptide is Fluoride-specific ion channel FluC 2 (Geobacillus kaustophilus (strain HTA426)).